A 351-amino-acid polypeptide reads, in one-letter code: Phosphoribosylformylglycinamidine cyclo-ligase (351 aa).

The protein belongs to the AIR synthase family.

The protein localises to the cytoplasm. It catalyses the reaction 2-formamido-N(1)-(5-O-phospho-beta-D-ribosyl)acetamidine + ATP = 5-amino-1-(5-phospho-beta-D-ribosyl)imidazole + ADP + phosphate + H(+). The protein operates within purine metabolism; IMP biosynthesis via de novo pathway; 5-amino-1-(5-phospho-D-ribosyl)imidazole from N(2)-formyl-N(1)-(5-phospho-D-ribosyl)glycinamide: step 2/2. The protein is Phosphoribosylformylglycinamidine cyclo-ligase of Idiomarina loihiensis (strain ATCC BAA-735 / DSM 15497 / L2-TR).